The primary structure comprises 537 residues: Cytochrome P450 27C1 (537 aa).

Position 483 (C483) interacts with heme.

Belongs to the cytochrome P450 family. The cofactor is heme. Expressed in the dorsal third of retinal pigment epithelium, but not in the ventral counterpart (at protein level).

It localises to the membrane. The catalysed reaction is all-trans-retinol + 2 reduced [adrenodoxin] + O2 + 2 H(+) = all-trans-3,4-didehydroretinol + 2 oxidized [adrenodoxin] + 2 H2O. Functionally, efficiently catalyzes the conversion of all-trans retinol (also called vitamin A1, the precursor of 11-cis retinal) to 3,4-didehydroretinol (also called vitamin A2, the precursor of 11-cis 3,4-didehydroretinal), also acts on all-trans retinal and all-trans retinoic acid. The replacement of 11-cis retinal chromophore in photopigments with 11-cis 3,4-didehydroretinal enhances sensitivity to long-wavelength light. This may improve vision in fresh water which is often turbid. In Aquarana catesbeiana (American bullfrog), this protein is Cytochrome P450 27C1 (cyp27c1).